Consider the following 304-residue polypeptide: tRNA pseudouridine synthase B (304 aa).

D38 serves as the catalytic Nucleophile.

It belongs to the pseudouridine synthase TruB family. Type 1 subfamily.

It catalyses the reaction uridine(55) in tRNA = pseudouridine(55) in tRNA. In terms of biological role, responsible for synthesis of pseudouridine from uracil-55 in the psi GC loop of transfer RNAs. The sequence is that of tRNA pseudouridine synthase B from Listeria monocytogenes serovar 1/2a (strain ATCC BAA-679 / EGD-e).